Consider the following 93-residue polypeptide: Small ribosomal subunit protein uS19 (93 aa).

It belongs to the universal ribosomal protein uS19 family.

Its function is as follows. Protein S19 forms a complex with S13 that binds strongly to the 16S ribosomal RNA. This Frankia alni (strain DSM 45986 / CECT 9034 / ACN14a) protein is Small ribosomal subunit protein uS19.